The sequence spans 206 residues: LexA repressor (206 aa).

Positions 27 to 47 form a DNA-binding region, H-T-H motif; the sequence is YEEIRQNLGFRSLNAVFKHLK. Residues S120 and K157 each act as for autocatalytic cleavage activity in the active site.

The protein belongs to the peptidase S24 family. As to quaternary structure, homodimer.

It carries out the reaction Hydrolysis of Ala-|-Gly bond in repressor LexA.. In terms of biological role, represses a number of genes involved in the response to DNA damage (SOS response), including recA and lexA. In the presence of single-stranded DNA, RecA interacts with LexA causing an autocatalytic cleavage which disrupts the DNA-binding part of LexA, leading to derepression of the SOS regulon and eventually DNA repair. This is LexA repressor from Syntrophobacter fumaroxidans (strain DSM 10017 / MPOB).